Reading from the N-terminus, the 205-residue chain is Guanylate kinase (205 aa).

The Guanylate kinase-like domain maps to 6–184 (GLLIVLSGPA…AVERIKAIVT (179 aa)). Position 13 to 20 (13 to 20 (GPAGVGKG)) interacts with ATP.

Belongs to the guanylate kinase family.

It localises to the cytoplasm. It catalyses the reaction GMP + ATP = GDP + ADP. Its function is as follows. Essential for recycling GMP and indirectly, cGMP. The protein is Guanylate kinase of Shouchella clausii (strain KSM-K16) (Alkalihalobacillus clausii).